We begin with the raw amino-acid sequence, 69 residues long: Putative membrane protein insertion efficiency factor (69 aa).

This sequence belongs to the UPF0161 family.

The protein localises to the cell membrane. Its function is as follows. Could be involved in insertion of integral membrane proteins into the membrane. The protein is Putative membrane protein insertion efficiency factor of Clostridium beijerinckii (strain ATCC 51743 / NCIMB 8052) (Clostridium acetobutylicum).